The primary structure comprises 267 residues: Diaminopimelate epimerase (267 aa).

N15 and N66 together coordinate substrate. The Proton donor role is filled by C75. Substrate is bound by residues 76-77, N150, N183, and 201-202; these read GN and ER. C210 acts as the Proton acceptor in catalysis. 211-212 serves as a coordination point for substrate; the sequence is GT.

Belongs to the diaminopimelate epimerase family. As to quaternary structure, homodimer.

It localises to the cytoplasm. It catalyses the reaction (2S,6S)-2,6-diaminopimelate = meso-2,6-diaminopimelate. It functions in the pathway amino-acid biosynthesis; L-lysine biosynthesis via DAP pathway; DL-2,6-diaminopimelate from LL-2,6-diaminopimelate: step 1/1. Catalyzes the stereoinversion of LL-2,6-diaminopimelate (L,L-DAP) to meso-diaminopimelate (meso-DAP), a precursor of L-lysine and an essential component of the bacterial peptidoglycan. This chain is Diaminopimelate epimerase, found in Bacteroides thetaiotaomicron (strain ATCC 29148 / DSM 2079 / JCM 5827 / CCUG 10774 / NCTC 10582 / VPI-5482 / E50).